We begin with the raw amino-acid sequence, 325 residues long: Elongation factor P--(R)-beta-lysine ligase (325 aa).

76-78 (SPE) provides a ligand contact to substrate. Residues 100-102 (RNE) and N109 contribute to the ATP site. A substrate-binding site is contributed by Y118. 244-245 (EL) contributes to the ATP binding site. Substrate is bound at residue E251. Position 300 (G300) interacts with ATP.

Belongs to the class-II aminoacyl-tRNA synthetase family. EpmA subfamily. In terms of assembly, homodimer.

The catalysed reaction is D-beta-lysine + L-lysyl-[protein] + ATP = N(6)-((3R)-3,6-diaminohexanoyl)-L-lysyl-[protein] + AMP + diphosphate + H(+). Its function is as follows. With EpmB is involved in the beta-lysylation step of the post-translational modification of translation elongation factor P (EF-P) on 'Lys-34'. Catalyzes the ATP-dependent activation of (R)-beta-lysine produced by EpmB, forming a lysyl-adenylate, from which the beta-lysyl moiety is then transferred to the epsilon-amino group of EF-P 'Lys-34'. The chain is Elongation factor P--(R)-beta-lysine ligase from Salmonella choleraesuis (strain SC-B67).